We begin with the raw amino-acid sequence, 153 residues long: Large ribosomal subunit protein eL15 (153 aa).

Lys32 is covalently cross-linked (Glycyl lysine isopeptide (Lys-Gly) (interchain with G-Cter in SUMO2)). A phosphoserine mark is found at Ser46 and Ser49. The disordered stretch occupies residues 114 to 135; that stretch reads TSAGRKSRGLGKGHKFHHTIGG. Basic residues predominate over residues 118–131; sequence RKSRGLGKGHKFHH.

It belongs to the eukaryotic ribosomal protein eL15 family. In terms of assembly, component of the large ribosomal subunit. Interacts with IFIT1 (via TPR repeats 1-4).

The protein localises to the cytoplasm. In terms of biological role, component of the large ribosomal subunit. The ribosome is a large ribonucleoprotein complex responsible for the synthesis of proteins in the cell. This chain is Large ribosomal subunit protein eL15 (RPL15), found in Sus scrofa (Pig).